The sequence spans 246 residues: 1-(5-phosphoribosyl)-5-[(5-phosphoribosylamino)methylideneamino] imidazole-4-carboxamide isomerase (246 aa).

Residue D8 is the Proton acceptor of the active site. The active-site Proton donor is D130.

This sequence belongs to the HisA/HisF family.

The protein localises to the cytoplasm. It catalyses the reaction 1-(5-phospho-beta-D-ribosyl)-5-[(5-phospho-beta-D-ribosylamino)methylideneamino]imidazole-4-carboxamide = 5-[(5-phospho-1-deoxy-D-ribulos-1-ylimino)methylamino]-1-(5-phospho-beta-D-ribosyl)imidazole-4-carboxamide. It participates in amino-acid biosynthesis; L-histidine biosynthesis; L-histidine from 5-phospho-alpha-D-ribose 1-diphosphate: step 4/9. This Alcanivorax borkumensis (strain ATCC 700651 / DSM 11573 / NCIMB 13689 / SK2) protein is 1-(5-phosphoribosyl)-5-[(5-phosphoribosylamino)methylideneamino] imidazole-4-carboxamide isomerase.